The chain runs to 423 residues: T-box protein 2 (423 aa).

Residues 70-243 (LWQQFSQCGT…NNPFAKGFRD (174 aa)) constitute a DNA-binding region (T-box). 2 disordered regions span residues 238-324 (AKGF…PLRS) and 384-423 (VEAT…LSKP). Residues 261-283 (DATQSPPGKTASLPTHSPHPSES) are compositionally biased toward polar residues. Residues 302–317 (TPTTSSLSTSTTPTLS) show a composition bias toward low complexity. The span at 394–404 (AEKPEVKKEQK) shows a compositional bias: basic and acidic residues.

Post-translationally, sumoylated. Expressed in body wall muscles and a subset of pharyngeal neurons. Expressed in head neurons and occassionally tail neurons. Not expressed in the pharynx.

It is found in the nucleus. Functionally, involved in the transcriptional regulation of genes required for the development of pharyngeal muscles derived from the ABa lineage. Acts as a transcriptional repressor and binds to T-box binding sites in its own promoter to negatively autoregulate its own expression in neurons, seam cells and the gut in order to restrict its expression to certain tissues. May function together with the nfya-1-NF-Y complex to repress its own expression. Plays a role in neural fate specification in the hermaphrodite-specific neuron (HSN)/PHB neuron lineage, acting in concert with homeobox protein egl-5 and the asymmetric cell division protein ham-1. The sequence is that of T-box protein 2 from Caenorhabditis elegans.